We begin with the raw amino-acid sequence, 331 residues long: UPF0324 membrane protein SERP0111 (331 aa).

The next 10 helical transmembrane spans lie at 7 to 26 (ASFM…SYIL), 31 to 48 (ILHT…AMIY), 69 to 88 (LLKF…DILG), 93 to 115 (LLLI…NQII), 122 to 144 (SILL…APIL), 154 to 176 (SVGI…EAIF), 183 to 205 (YGAW…GIGG), 249 to 271 (IPYF…IPSL), 275 to 297 (IINV…NIVL), and 308 to 330 (FIVI…SIMF).

Belongs to the UPF0324 family.

The protein localises to the cell membrane. This Staphylococcus epidermidis (strain ATCC 35984 / DSM 28319 / BCRC 17069 / CCUG 31568 / BM 3577 / RP62A) protein is UPF0324 membrane protein SERP0111.